Consider the following 271-residue polypeptide: D-methionine-binding lipoprotein MetQ (271 aa).

Residues 1–22 form the signal peptide; it reads MSLKFKSIAAISALIGTLTLVG. Cys23 is lipidated: N-palmitoyl cysteine. Residue Cys23 is the site of S-diacylglycerol cysteine attachment.

The protein belongs to the NlpA lipoprotein family.

The protein localises to the cell membrane. In terms of biological role, this protein is a component of a D-methionine permease, a binding protein-dependent, ATP-driven transport system. In Yersinia pestis, this protein is D-methionine-binding lipoprotein MetQ (metQ).